The following is a 330-amino-acid chain: Beta-ketoacyl-[acyl-carrier-protein] synthase III 2 (330 aa).

Residues C118 and H246 contribute to the active site. Residues 247–251 (QANLR) are ACP-binding. N276 is an active-site residue.

The protein belongs to the thiolase-like superfamily. FabH family. In terms of assembly, homodimer.

Its subcellular location is the cytoplasm. The catalysed reaction is malonyl-[ACP] + acetyl-CoA + H(+) = 3-oxobutanoyl-[ACP] + CO2 + CoA. Its pathway is lipid metabolism; fatty acid biosynthesis. Functionally, catalyzes the condensation reaction of fatty acid synthesis by the addition to an acyl acceptor of two carbons from malonyl-ACP. Catalyzes the first condensation reaction which initiates fatty acid synthesis and may therefore play a role in governing the total rate of fatty acid production. Possesses both acetoacetyl-ACP synthase and acetyl transacylase activities. Its substrate specificity determines the biosynthesis of branched-chain and/or straight-chain of fatty acids. The sequence is that of Beta-ketoacyl-[acyl-carrier-protein] synthase III 2 from Streptomyces coelicolor (strain ATCC BAA-471 / A3(2) / M145).